Reading from the N-terminus, the 173-residue chain is Translation initiation factor IF-3 (173 aa).

The protein belongs to the IF-3 family. Monomer.

Its subcellular location is the cytoplasm. Functionally, IF-3 binds to the 30S ribosomal subunit and shifts the equilibrium between 70S ribosomes and their 50S and 30S subunits in favor of the free subunits, thus enhancing the availability of 30S subunits on which protein synthesis initiation begins. In Neisseria gonorrhoeae (strain ATCC 700825 / FA 1090), this protein is Translation initiation factor IF-3.